Consider the following 564-residue polypeptide: Esterase FE4 (564 aa).

The N-terminal stretch at 1–23 is a signal peptide; that stretch reads MKNTCGILLNLFLFIGCFLTCSA. N81 is a glycosylation site (N-linked (GlcNAc...) asparagine). C89 and C106 are joined by a disulfide. Residue S214 is the Acyl-ester intermediate of the active site. A disulfide bond links C266 and C277. N269 carries N-linked (GlcNAc...) asparagine glycosylation. Residue E339 is the Charge relay system of the active site. N-linked (GlcNAc...) asparagine glycosylation is found at N371, N404, and N443. H463 (charge relay system) is an active-site residue.

Belongs to the type-B carboxylesterase/lipase family.

The enzyme catalyses a carboxylic ester + H2O = an alcohol + a carboxylate + H(+). Its function is as follows. Overproduction of nonspecific esterases is a common mechanism of resistance to organophosphate insecticides. The sequence is that of Esterase FE4 from Myzus persicae (Green peach aphid).